Consider the following 497-residue polypeptide: Probable cytosol aminopeptidase (497 aa).

Residues K263 and D268 each contribute to the Mn(2+) site. K275 is a catalytic residue. Mn(2+) contacts are provided by D286, D345, and E347. Residue R349 is part of the active site.

It belongs to the peptidase M17 family. It depends on Mn(2+) as a cofactor.

It localises to the cytoplasm. The catalysed reaction is Release of an N-terminal amino acid, Xaa-|-Yaa-, in which Xaa is preferably Leu, but may be other amino acids including Pro although not Arg or Lys, and Yaa may be Pro. Amino acid amides and methyl esters are also readily hydrolyzed, but rates on arylamides are exceedingly low.. The enzyme catalyses Release of an N-terminal amino acid, preferentially leucine, but not glutamic or aspartic acids.. Its function is as follows. Presumably involved in the processing and regular turnover of intracellular proteins. Catalyzes the removal of unsubstituted N-terminal amino acids from various peptides. This is Probable cytosol aminopeptidase from Methylorubrum extorquens (strain CM4 / NCIMB 13688) (Methylobacterium extorquens).